The sequence spans 165 residues: Thiol peroxidase (165 aa).

The Thioredoxin domain occupies 18-164 (RKVGDKAPNF…YEAAIEAAKK (147 aa)). Catalysis depends on C60, which acts as the Cysteine sulfenic acid (-SOH) intermediate. C60 and C94 are oxidised to a cystine.

This sequence belongs to the peroxiredoxin family. Tpx subfamily. Homodimer.

The enzyme catalyses a hydroperoxide + [thioredoxin]-dithiol = an alcohol + [thioredoxin]-disulfide + H2O. In terms of biological role, thiol-specific peroxidase that catalyzes the reduction of hydrogen peroxide and organic hydroperoxides to water and alcohols, respectively. Plays a role in cell protection against oxidative stress by detoxifying peroxides. This Listeria innocua serovar 6a (strain ATCC BAA-680 / CLIP 11262) protein is Thiol peroxidase.